The sequence spans 925 residues: Proto-oncogene DBL (925 aa).

Positions 1–88 (MAEANPRRGK…ELGGTLQYCH (88 aa)) constitute a CRAL-TRIO domain. The Spectrin repeat unit spans residues 221–322 (WKFEQDFQQL…EIKAKRIQLS (102 aa)). The region spanning 495-675 (LKNHVLNELI…LDLLKSVNDS (181 aa)) is the DH domain. The 123-residue stretch at 687–809 (NLNELGKMIM…WLKEIRNILL (123 aa)) folds into the PH domain.

It belongs to the MCF2 family. In terms of assembly, interacts with an array of inositol phospholipids such as phosphatidylinositol 3-phosphate (PI3P), phosphatidylinositol 4-phosphate (PI4P) and phosphatidylinositol 5-phosphate (PI5P). May interact with CCPG1. Phosphorylation by TNK2 enhances guanine nucleotide exchange factor (GEF) activity toward Rho family proteins. In terms of tissue distribution, isoform 1 is expressed only in brain. Isoform 3 is expressed in heart, kidney, spleen, liver and testis. Isoform 4 is expressed in brain, heart, kidney, testis, placenta, stomach and peripheral blood. The protein is detectable in brain, heart, kidney, intestine, muscle, lung and testis.

Its subcellular location is the cytoplasm. The protein resides in the membrane. Guanine nucleotide exchange factor (GEF) that modulates the Rho family of GTPases. Promotes the conversion of some member of the Rho family GTPase from the GDP-bound to the GTP-bound form. Isoform 1 exhibits no activity toward RHOA, RAC1 or CDC42. Isoform 2 exhibits decreased GEF activity toward CDC42. Isoform 3 exhibits a weak but significant activity toward RAC1 and CDC42. Isoform 4 exhibits significant activity toward RHOA and CDC42. The truncated DBL oncogene is active toward RHOA, RAC1 and CDC42. This is Proto-oncogene DBL (MCF2) from Homo sapiens (Human).